The sequence spans 570 residues: Formate--tetrahydrofolate ligase (570 aa).

An ATP-binding site is contributed by 65-72 (TPFGEGKT).

The protein belongs to the formate--tetrahydrofolate ligase family.

It carries out the reaction (6S)-5,6,7,8-tetrahydrofolate + formate + ATP = (6R)-10-formyltetrahydrofolate + ADP + phosphate. Its pathway is one-carbon metabolism; tetrahydrofolate interconversion. The sequence is that of Formate--tetrahydrofolate ligase from Shewanella halifaxensis (strain HAW-EB4).